The sequence spans 109 residues: Fluorescence recovery protein (109 aa).

In terms of assembly, probably a dimer, interacts with the C-terminal domain of OCP-R.

The protein resides in the cellular thylakoid membrane. In terms of biological role, destabilizes orange carotenoid protein-R form (OCP-R), the FRP-OCP interaction accelerates the OCP-R to OCP-O conversion. Increases fluorescence recovery following non-photochemical quenching (NPQ) by OCP, most probably by destabilizing OCP-R binding to the phycobilisome core. In Synechocystis sp. (strain ATCC 27184 / PCC 6803 / Kazusa), this protein is Fluorescence recovery protein (frp).